Reading from the N-terminus, the 497-residue chain is Glycerol kinase (497 aa).

Residue T12 coordinates ADP. Positions 12, 13, and 14 each coordinate ATP. Position 12 (T12) interacts with sn-glycerol 3-phosphate. R16 contacts ADP. Sn-glycerol 3-phosphate-binding residues include R82, E83, Y134, and D243. Glycerol-binding residues include R82, E83, Y134, D243, and Q244. 2 residues coordinate ADP: T265 and G308. 4 residues coordinate ATP: T265, G308, Q312, and G411. ADP is bound at residue G411.

Belongs to the FGGY kinase family.

It carries out the reaction glycerol + ATP = sn-glycerol 3-phosphate + ADP + H(+). The protein operates within polyol metabolism; glycerol degradation via glycerol kinase pathway; sn-glycerol 3-phosphate from glycerol: step 1/1. Inhibited by fructose 1,6-bisphosphate (FBP). Its function is as follows. Key enzyme in the regulation of glycerol uptake and metabolism. Catalyzes the phosphorylation of glycerol to yield sn-glycerol 3-phosphate. This chain is Glycerol kinase, found in Xanthobacter autotrophicus (strain ATCC BAA-1158 / Py2).